Reading from the N-terminus, the 1025-residue chain is Multidrug resistance protein MdtC (1025 aa).

12 consecutive transmembrane segments (helical) span residues 3–23 (FFALFIYRPVATILLSVAITL), 333–353 (EVEQTLIISVALVILVVFLFL), 360–380 (IIPAVAVPVSLIGTFAAMYLC), 387–407 (LSLMALTIATGFVVDDAIVVL), 431–451 (VGFTVLSMSLSLVAVFLPLLL), 463–483 (FAVTLSVAIGISLLVSLTLTP), 528–548 (LVGVVLLGTIALNIWLYISIP), 853–873 (VILIIAAIATVYIVLGILYES), 875–895 (VHPLTILSTLPSAGVGALLAL), 897–917 (LFNAPFSLIALIGIMLLIGIV), 953–973 (PIMMTTLAALFGALPLVLSGG), and 984–1004 (ITIVGGLVMSQLLTLYTTPVV).

This sequence belongs to the resistance-nodulation-cell division (RND) (TC 2.A.6) family. MdtC subfamily. Part of a tripartite efflux system composed of MdtA, MdtB and MdtC. MdtC forms a heteromultimer with MdtB.

Its subcellular location is the cell inner membrane. The polypeptide is Multidrug resistance protein MdtC (Shigella boydii serotype 4 (strain Sb227)).